Here is a 219-residue protein sequence, read N- to C-terminus: Ribosomal RNA small subunit methyltransferase Nep1 (219 aa).

S-adenosyl-L-methionine is bound by residues Gly178, Gly183, and 196–201 (LYKAPL).

This sequence belongs to the class IV-like SAM-binding methyltransferase superfamily. RNA methyltransferase NEP1 family. Homodimer.

The catalysed reaction is a pseudouridine in rRNA + S-adenosyl-L-methionine = an N(1)-methylpseudouridine in rRNA + S-adenosyl-L-homocysteine + H(+). Methyltransferase involved in ribosomal biogenesis. Specifically catalyzes the N1-methylation of the pseudouridine corresponding to position 914 in M.jannaschii 16S rRNA. The polypeptide is Ribosomal RNA small subunit methyltransferase Nep1 (Thermococcus onnurineus (strain NA1)).